We begin with the raw amino-acid sequence, 418 residues long: Delta(14)-sterol reductase TM7SF2 (418 aa).

A run of 6 helical transmembrane segments spans residues 13–35, 62–81, 102–124, 129–148, 255–277, and 287–304; these read FGGPLGAAALMLLLPVTMFHLLL, ALLLCLTWLGLQAALYLLPA, GFQALVLTALLVGLGVSAGLPLS, MLLPLAFAATLTAFIFSLLL, FGFMLAFGDLAWVPFTYSLQAQF, and WPLASFICLINAVGYYIF. Residues K311, R315, L338, W343, and 350 to 351 contribute to the NADP(+) site; that span reads NY. Residues 355 to 377 form a helical membrane-spanning segment; that stretch reads LIMALAWSLPCGVFHLLPYFYFL. NADP(+) is bound by residues D390, 394–398, and Y405; that span reads CRQKY.

It belongs to the ERG4/ERG24 family. In terms of tissue distribution, highly expressed in liver and brain.

It is found in the microsome membrane. It localises to the endoplasmic reticulum membrane. It carries out the reaction 4,4-dimethyl-5alpha-cholesta-8,24-dien-3beta-ol + NADP(+) = 4,4-dimethyl-5alpha-cholesta-8,14,24-trien-3beta-ol + NADPH + H(+). It catalyses the reaction 5alpha-cholest-8,14-dien-3beta-ol + NADPH + H(+) = 5alpha-cholest-8-en-3beta-ol + NADP(+). The catalysed reaction is 4,4-dimethyl-8,14-cholestadien-3beta-ol + NADPH + H(+) = 4,4-dimethyl-5alpha-cholest-8-en-3beta-ol + NADP(+). It participates in steroid biosynthesis; cholesterol biosynthesis. Functionally, catalyzes the reduction of the C14-unsaturated bond of lanosterol, as part of the metabolic pathway leading to cholesterol biosynthesis. This chain is Delta(14)-sterol reductase TM7SF2 (TM7SF2), found in Bos taurus (Bovine).